The primary structure comprises 144 residues: Nucleoside diphosphate kinase (144 aa).

Residues K5, F53, R81, T87, R98, and N108 each contribute to the ATP site. H111 serves as the catalytic Pros-phosphohistidine intermediate.

It belongs to the NDK family. It depends on Mg(2+) as a cofactor.

The catalysed reaction is a 2'-deoxyribonucleoside 5'-diphosphate + ATP = a 2'-deoxyribonucleoside 5'-triphosphate + ADP. The enzyme catalyses a ribonucleoside 5'-diphosphate + ATP = a ribonucleoside 5'-triphosphate + ADP. In terms of biological role, major role in the synthesis of nucleoside triphosphates other than ATP. The ATP gamma phosphate is transferred to the NDP beta phosphate via a ping-pong mechanism, using a phosphorylated active-site intermediate. The sequence is that of Nucleoside diphosphate kinase from Solanum lycopersicum (Tomato).